The chain runs to 675 residues: DNA gyrase subunit B (675 aa).

Residues Ser-453 to Pro-567 form the Toprim domain. Positions 459, 532, and 534 each coordinate Mg(2+).

This sequence belongs to the type II topoisomerase GyrB family. As to quaternary structure, heterotetramer, composed of two GyrA and two GyrB chains. In the heterotetramer, GyrA contains the active site tyrosine that forms a transient covalent intermediate with DNA, while GyrB binds cofactors and catalyzes ATP hydrolysis. Mg(2+) is required as a cofactor. Requires Mn(2+) as cofactor. It depends on Ca(2+) as a cofactor.

The protein localises to the cytoplasm. The enzyme catalyses ATP-dependent breakage, passage and rejoining of double-stranded DNA.. In terms of biological role, a type II topoisomerase that negatively supercoils closed circular double-stranded (ds) DNA in an ATP-dependent manner to modulate DNA topology and maintain chromosomes in an underwound state. Negative supercoiling favors strand separation, and DNA replication, transcription, recombination and repair, all of which involve strand separation. Also able to catalyze the interconversion of other topological isomers of dsDNA rings, including catenanes and knotted rings. Type II topoisomerases break and join 2 DNA strands simultaneously in an ATP-dependent manner. This chain is DNA gyrase subunit B, found in Mycobacterium tuberculosis (strain ATCC 25177 / H37Ra).